The following is a 149-amino-acid chain: Large-conductance mechanosensitive channel (149 aa).

3 helical membrane-spanning segments follow: residues 10–30, 41–61, and 87–107; these read FALK…GAFA, IMPI…MFLI, and GSFI…FMMV.

The protein belongs to the MscL family. Homopentamer.

Its subcellular location is the cell inner membrane. Channel that opens in response to stretch forces in the membrane lipid bilayer. May participate in the regulation of osmotic pressure changes within the cell. This is Large-conductance mechanosensitive channel from Psychrobacter cryohalolentis (strain ATCC BAA-1226 / DSM 17306 / VKM B-2378 / K5).